The sequence spans 142 residues: MNQTFSFNFDDTLSNSSGLINLEKINQNCSPNYQYFKIKFIGGYLHIKNKSGDILEKYDLKDLISLIALKKDYLKLSSPNNKKPNEFTNIKNKHLENRFNLYVINEDINGKITKNGILEEIILNRLLLSILLGNEENLLQIA.

This sequence belongs to the TULIP P47 family. In terms of assembly, orfX1 was not detected as part of a crude toxin extract that includes BoNTA2/NTNH, P47, OrfX2 and OrfX3.

In terms of biological role, part of a botulinum neurotoxin type A2 (BoNT) locus; may be part of a progenitor toxin complex required to protect BoNT during its passage through the host gastrointestinal tract. Binds phosphatidylinositol (3,4) bisphosphate, phosphatidylethanolamine and phosphatidylserine. The sequence is that of Protein OrfX1 (orfX1) from Clostridium botulinum (strain Kyoto / Type A2).